Consider the following 313-residue polypeptide: Zinc transporter ZitB (313 aa).

Residues 1 to 20 (MAHSHSHTSSHLPEDNNARR) are Cytoplasmic-facing. A helical transmembrane segment spans residues 21–41 (LLYAFGVTAGFMLVEVVGGFL). The Periplasmic portion of the chain corresponds to 42–47 (SGSLAL). A helical transmembrane segment spans residues 48–68 (LADAGHMLTDTAALLFALLAV). At 69-89 (QFSRRPPTIRHTFGWLRLTTL) the chain is on the cytoplasmic side. Residues 90–110 (AAFVNAIALVVITILIVWEAI) traverse the membrane as a helical segment. Over 111–121 (ERFRTPRPVEG) the chain is Periplasmic. A helical membrane pass occupies residues 122–142 (GMMMAIAVAGLLANILSFWLL). Residues 143 to 159 (HHGSEEKNLNVRAAALH) lie on the Cytoplasmic side of the membrane. The helical transmembrane segment at 160–180 (VLGDLLGSVGAIIAALIIIWT) threads the bilayer. Position 181 (Gly181) is a topological domain, periplasmic. Residues 182–202 (WTPADPILSILVSLLVLRSAW) traverse the membrane as a helical segment. Over 203 to 313 (RLLKDSVNEL…GVSGHSHHHH (111 aa)) the chain is Cytoplasmic.

The protein belongs to the cation diffusion facilitator (CDF) transporter (TC 2.A.4) family. SLC30A subfamily.

Its subcellular location is the cell inner membrane. In terms of biological role, involved in zinc efflux across the cytoplasmic membrane, thus reducing zinc accumulation in the cytoplasm and rendering bacteria more resistant to zinc. It may contribute to zinc homeostasis at low concentrations of zinc, whereas ZntA is required for growth at more toxic concentrations. The chain is Zinc transporter ZitB (zitB) from Escherichia coli (strain K12).